The sequence spans 388 residues: Nitric oxide reductase FlRd-NAD(+) reductase (388 aa).

Belongs to the FAD-dependent oxidoreductase family. It depends on FAD as a cofactor.

The protein localises to the cytoplasm. The catalysed reaction is 2 reduced [nitric oxide reductase rubredoxin domain] + NAD(+) + H(+) = 2 oxidized [nitric oxide reductase rubredoxin domain] + NADH. It participates in nitrogen metabolism; nitric oxide reduction. One of at least two accessory proteins for anaerobic nitric oxide (NO) reductase. Reduces the rubredoxin moiety of NO reductase. This Aeromonas salmonicida (strain A449) protein is Nitric oxide reductase FlRd-NAD(+) reductase.